A 380-amino-acid polypeptide reads, in one-letter code: Histidinol-phosphate aminotransferase 1 (380 aa).

Lys235 is subject to N6-(pyridoxal phosphate)lysine.

Belongs to the class-II pyridoxal-phosphate-dependent aminotransferase family. Histidinol-phosphate aminotransferase subfamily. In terms of assembly, homodimer. Requires pyridoxal 5'-phosphate as cofactor.

It catalyses the reaction L-histidinol phosphate + 2-oxoglutarate = 3-(imidazol-4-yl)-2-oxopropyl phosphate + L-glutamate. It functions in the pathway amino-acid biosynthesis; L-histidine biosynthesis; L-histidine from 5-phospho-alpha-D-ribose 1-diphosphate: step 7/9. This Psychrobacter arcticus (strain DSM 17307 / VKM B-2377 / 273-4) protein is Histidinol-phosphate aminotransferase 1.